We begin with the raw amino-acid sequence, 485 residues long: Glutamyl-tRNA(Gln) amidotransferase subunit A (485 aa).

Catalysis depends on charge relay system residues K79 and S154. S178 (acyl-ester intermediate) is an active-site residue.

Belongs to the amidase family. GatA subfamily. In terms of assembly, heterotrimer of A, B and C subunits.

It catalyses the reaction L-glutamyl-tRNA(Gln) + L-glutamine + ATP + H2O = L-glutaminyl-tRNA(Gln) + L-glutamate + ADP + phosphate + H(+). Functionally, allows the formation of correctly charged Gln-tRNA(Gln) through the transamidation of misacylated Glu-tRNA(Gln) in organisms which lack glutaminyl-tRNA synthetase. The reaction takes place in the presence of glutamine and ATP through an activated gamma-phospho-Glu-tRNA(Gln). The protein is Glutamyl-tRNA(Gln) amidotransferase subunit A of Staphylococcus carnosus (strain TM300).